The sequence spans 148 residues: Arginine repressor (148 aa).

The protein belongs to the ArgR family.

The protein localises to the cytoplasm. Its pathway is amino-acid biosynthesis; L-arginine biosynthesis [regulation]. In terms of biological role, regulates arginine biosynthesis genes. This chain is Arginine repressor, found in Koribacter versatilis (strain Ellin345).